The primary structure comprises 208 residues: Large ribosomal subunit protein uL4 (208 aa).

Residues 44–79 (QRQGTHKSKERSEISGSTRKLGRQKGGGGARRGDIN) form a disordered region.

It belongs to the universal ribosomal protein uL4 family. As to quaternary structure, part of the 50S ribosomal subunit.

Functionally, one of the primary rRNA binding proteins, this protein initially binds near the 5'-end of the 23S rRNA. It is important during the early stages of 50S assembly. It makes multiple contacts with different domains of the 23S rRNA in the assembled 50S subunit and ribosome. Its function is as follows. Forms part of the polypeptide exit tunnel. This is Large ribosomal subunit protein uL4 from Phocaeicola vulgatus (strain ATCC 8482 / DSM 1447 / JCM 5826 / CCUG 4940 / NBRC 14291 / NCTC 11154) (Bacteroides vulgatus).